A 259-amino-acid chain; its full sequence is 3-deoxy-manno-octulosonate cytidylyltransferase (259 aa).

The protein belongs to the KdsB family.

It is found in the cytoplasm. It catalyses the reaction 3-deoxy-alpha-D-manno-oct-2-ulosonate + CTP = CMP-3-deoxy-beta-D-manno-octulosonate + diphosphate. It functions in the pathway nucleotide-sugar biosynthesis; CMP-3-deoxy-D-manno-octulosonate biosynthesis; CMP-3-deoxy-D-manno-octulosonate from 3-deoxy-D-manno-octulosonate and CTP: step 1/1. Its pathway is bacterial outer membrane biogenesis; lipopolysaccharide biosynthesis. In terms of biological role, activates KDO (a required 8-carbon sugar) for incorporation into bacterial lipopolysaccharide in Gram-negative bacteria. The sequence is that of 3-deoxy-manno-octulosonate cytidylyltransferase from Aeromonas salmonicida (strain A449).